A 470-amino-acid chain; its full sequence is 3-oxo-isoapionate kinase (470 aa).

Residues D30 and R78 each contribute to the substrate site. ATP contacts are provided by residues S291, 403 to 406, and G451; that span reads GGDS.

Belongs to the four-carbon acid sugar kinase family.

The catalysed reaction is 3-oxoisoapionate + ATP = 3-oxoisoapionate 4-phosphate + ADP + H(+). It functions in the pathway carbohydrate metabolism. Functionally, involved in catabolism of D-apiose. Catalyzes the phosphorylation of 3-oxo-isoapionate to 3-oxo-isoapionate 4-phosphate. This chain is 3-oxo-isoapionate kinase, found in Paraburkholderia graminis (strain ATCC 700544 / DSM 17151 / LMG 18924 / NCIMB 13744 / C4D1M).